Reading from the N-terminus, the 252-residue chain is L-aspartate dehydrogenase (252 aa).

2 residues coordinate NAD(+): Ala-119 and Asn-175. His-203 is a catalytic residue.

Belongs to the L-aspartate dehydrogenase family.

It carries out the reaction L-aspartate + NADP(+) + H2O = oxaloacetate + NH4(+) + NADPH + H(+). The enzyme catalyses L-aspartate + NAD(+) + H2O = oxaloacetate + NH4(+) + NADH + H(+). The protein operates within cofactor biosynthesis; NAD(+) biosynthesis; iminoaspartate from L-aspartate (dehydrogenase route): step 1/1. Specifically catalyzes the NAD or NADP-dependent dehydrogenation of L-aspartate to iminoaspartate. In Methanospirillum hungatei JF-1 (strain ATCC 27890 / DSM 864 / NBRC 100397 / JF-1), this protein is L-aspartate dehydrogenase.